The chain runs to 78 residues: MRDRILAAVCDVLYIDEADLIDGDETDLRDLGLDSVRFVLLMKQLGVNRQSELPSRLAANPSIAGWLRELEAVCTEFG.

One can recognise a Carrier domain in the interval 1-78 (MRDRILAAVC…ELEAVCTEFG (78 aa)). Ser-35 is modified (O-(pantetheine 4'-phosphoryl)serine).

Belongs to the acyl carrier protein (ACP) family. Pantetheine 4'-phosphate serves as cofactor.

It functions in the pathway lipid metabolism; fatty acid metabolism. In terms of biological role, acyl-carrier protein (ACP) involved in the biosynthesis of a unique class of isonitrile lipopeptides (INLPs) that seem to play a role in metal acquisition. Is the dedicated ACP for the loading of activated acyl groups catalyzed by FadD10. The chain is Acyl carrier protein BQ2027_MB0103 from Mycobacterium bovis (strain ATCC BAA-935 / AF2122/97).